A 364-amino-acid polypeptide reads, in one-letter code: Chorismate synthase (364 aa).

An NADP(+)-binding site is contributed by Arg-48. FMN-binding positions include 131 to 133, 243 to 244, Gly-288, 303 to 307, and Arg-329; these read RAS, NA, and KPTSS.

The protein belongs to the chorismate synthase family. Homotetramer. FMNH2 is required as a cofactor.

The enzyme catalyses 5-O-(1-carboxyvinyl)-3-phosphoshikimate = chorismate + phosphate. Its pathway is metabolic intermediate biosynthesis; chorismate biosynthesis; chorismate from D-erythrose 4-phosphate and phosphoenolpyruvate: step 7/7. Catalyzes the anti-1,4-elimination of the C-3 phosphate and the C-6 proR hydrogen from 5-enolpyruvylshikimate-3-phosphate (EPSP) to yield chorismate, which is the branch point compound that serves as the starting substrate for the three terminal pathways of aromatic amino acid biosynthesis. This reaction introduces a second double bond into the aromatic ring system. The protein is Chorismate synthase of Bartonella bacilliformis (strain ATCC 35685 / KC583 / Herrer 020/F12,63).